The chain runs to 318 residues: Taste receptor type 2 member 7 (318 aa).

The Extracellular portion of the chain corresponds to 1 to 9; that stretch reads MADKVQTTL. Residues 10-30 traverse the membrane as a helical segment; the sequence is LFLAVGEFSVGILGNAFIGLV. Over 31 to 55 the chain is Cytoplasmic; the sequence is NCMDWVKKRKIASIDLILTSLAISR. The helical transmembrane segment at 56–76 threads the bilayer; sequence ICLLCIILLDCFTLVLYPDVY. The Extracellular portion of the chain corresponds to 77 to 94; it reads ATGKEMRIIDFFWTLTNH. A helical transmembrane segment spans residues 95-115; it reads LSIWFATCLSIYYFFKIGNFF. The Cytoplasmic segment spans residues 116–128; that stretch reads HPLFLWMKWRIDR. The chain crosses the membrane as a helical span at residues 129 to 149; that stretch reads VISWILLGCVVLSVFISLPAT. Over 150–187 the chain is Extracellular; that stretch reads ENLNADFRFCVKAKRKTNLTWSCRVNKTQHASTKLFLN. N-linked (GlcNAc...) asparagine glycans are attached at residues N167 and N175. Residues 188–208 form a helical membrane-spanning segment; that stretch reads LATLLPFCVCLMSFFLLILSL. The Cytoplasmic portion of the chain corresponds to 209–235; the sequence is RRHIRRMQLSATGCRDPSTEAHVRALK. The chain crosses the membrane as a helical span at residues 236–256; it reads AVISFLLLFIAYYLSFLIATS. Residues 257 to 266 lie on the Extracellular side of the membrane; it reads SYFMPETELA. Residues 267–287 form a helical membrane-spanning segment; the sequence is VIFGESIALIYPSSHSFILIL. The Cytoplasmic portion of the chain corresponds to 288 to 318; it reads GNNKLRYVSLKVIWKVMSILKGRKFQQHKQI.

Belongs to the G-protein coupled receptor T2R family.

Its subcellular location is the membrane. Gustducin-coupled receptor implicated in the perception of bitter compounds in the oral cavity and the gastrointestinal tract. Signals through PLCB2 and the calcium-regulated cation channel TRPM5. In Gorilla gorilla gorilla (Western lowland gorilla), this protein is Taste receptor type 2 member 7 (TAS2R7).